The chain runs to 78 residues: Structural DNA-binding protein p10 (78 aa).

Positions 1 to 27 (MPTKAGTKSTANKKTTKGSSKSGSSRG) are enriched in low complexity. The interval 1 to 41 (MPTKAGTKSTANKKTTKGSSKSGSSRGHTGKTHASSSMHSG) is disordered.

This sequence belongs to the asfivirus P10 family.

It is found in the virion. In terms of biological role, may play a role in genome packaging through direct interaction with viral DNA. Binds to ssDNA and dsDNA with the same apparent affinity in vitro. The protein is Structural DNA-binding protein p10 of African swine fever virus (strain Badajoz 1971 Vero-adapted) (Ba71V).